The primary structure comprises 821 residues: MGSNLPAQPNLRVTIIAADGLYKRDVFRLPDPFAVATVGGEQTHTTSVIKKTLNPYWNEMFDLRVNEDSILAIQIFDQKKFKKKDQGFLGVINVRIGDVIDLQMGGDEMLTRDLKKSNDNLVVHGKLIINLSTNLSTPNPNQANGLHRTQLGASTSSGLVPQVAPTPSVPQAGPSSVDQSAAASSASLNPQRVPSATRPTSQIAPPNGAPPIANGQGVPRPNLSSFEDNQGRLPAGWERREDNLGRTYYVDHNTRTTTWNRPSANYNEQTQRTQREANMQLERRAHQNRMLPEDRTGASSPNLSETQPQAQTPPAGGSGASNSNVVSMMATGATTAGTGELPPGWEQRTTPEGRPYFVDHNTRTTTWVDPRRQQYIRMYGQNASGGNTTIQQQPVSQLGPLPSGWEMRLTNTARVYFVDHNTKTTTWDDPRLPSSLDQGVPQYKRDFRRKLIYFRSQPALRIMSGQCHVKVRRNNIFEDSYAEIMRQSASDLKKRLMIKFDGEDGLDYGGLSREFFFLLSHEMFNPFYCLFEYSAHDNYTLQINPHSGVNPEHLNYFKFIGRVVGLAIFHRRFLDSFFIGAFYKMMLRKKVSLQDMEGVDEDLHRNLTWTLENDIEGIIDLTFTVDDEKFGERRTIELKPGGEDIPVTNENKHEYVELVTEWKIVKRVEEQFNAFMSGFNELIPADLVNVFDERELELLIGGIADIDVDDWKKHTDYRGYQEQDEVIQNFWKIVRTWDAEQKSRLLQFTTGTSRIPVNGFKDLQGSDGPRRFTIEKSGDPIALPKSHTCFNRLDLPPYKSHEVLEHKLSIAVEETLGFGQE.

Residues 1-112 (MGSNLPAQPN…QMGGDEMLTR (112 aa)) enclose the C2 domain. 2 stretches are compositionally biased toward polar residues: residues 133 to 144 (TNLSTPNPNQAN) and 188 to 201 (LNPQRVPSATRPTS). Disordered regions lie at residues 133–239 (TNLS…GWER) and 255–359 (RTTT…YFVD). Residues 202–217 (QIAPPNGAPPIANGQG) show a composition bias toward low complexity. One can recognise a WW 1 domain in the interval 231 to 264 (GRLPAGWERREDNLGRTYYVDHNTRTTTWNRPSA). Positions 255–272 (RTTTWNRPSANYNEQTQR) are enriched in polar residues. Residues 281 to 296 (LERRAHQNRMLPEDRT) are compositionally biased toward basic and acidic residues. Over residues 297 to 312 (GASSPNLSETQPQAQT) the composition is skewed to polar residues. A compositionally biased stretch (low complexity) spans 320–339 (ASNSNVVSMMATGATTAGTG). 2 consecutive WW domains span residues 339–372 (GELPPGWEQRTTPEGRPYFVDHNTRTTTWVDPRR) and 399–432 (GPLPSGWEMRLTNTARVYFVDHNTKTTTWDDPRL). The HECT domain occupies 488-821 (SASDLKKRLM…VEETLGFGQE (334 aa)). The active-site Glycyl thioester intermediate is the cysteine 789.

It belongs to the RSP5/NEDD4 family. In terms of assembly, interacts with apyA and creD.

The protein localises to the cytoplasm. It catalyses the reaction S-ubiquitinyl-[E2 ubiquitin-conjugating enzyme]-L-cysteine + [acceptor protein]-L-lysine = [E2 ubiquitin-conjugating enzyme]-L-cysteine + N(6)-ubiquitinyl-[acceptor protein]-L-lysine.. It functions in the pathway protein modification; protein ubiquitination. In terms of biological role, E3 ubiquitin-protein ligase which accepts ubiquitin from an E2 ubiquitin-conjugating enzyme in the form of a thioester and then directly transfers the ubiquitin to targeted substrates. Probably involved in the regulatory network controlling carbon source utilization. Ubiquitinates 'Lys-528' of the uric acid/xanthine transporter uapA at the cell membrane, leading to its internalization, sorting into the endosomal pathway to the vacuolar lumen where it is eventually degraded. This chain is E3 ubiquitin-protein ligase RSP5 (hulA), found in Emericella nidulans (strain FGSC A4 / ATCC 38163 / CBS 112.46 / NRRL 194 / M139) (Aspergillus nidulans).